A 273-amino-acid chain; its full sequence is Shikimate dehydrogenase (NADP(+)) (273 aa).

Shikimate is bound by residues 14-16 and Thr61; that span reads SKS. The Proton acceptor role is filled by Lys65. The shikimate site is built by Asn86 and Asp102. Residues 126–130, 150–155, and Met213 each bind NADP(+); these read GAGGA and NRTHAK. Tyr215 contacts shikimate. Gly237 is a binding site for NADP(+).

This sequence belongs to the shikimate dehydrogenase family. Homodimer.

It carries out the reaction shikimate + NADP(+) = 3-dehydroshikimate + NADPH + H(+). It participates in metabolic intermediate biosynthesis; chorismate biosynthesis; chorismate from D-erythrose 4-phosphate and phosphoenolpyruvate: step 4/7. Involved in the biosynthesis of the chorismate, which leads to the biosynthesis of aromatic amino acids. Catalyzes the reversible NADPH linked reduction of 3-dehydroshikimate (DHSA) to yield shikimate (SA). The protein is Shikimate dehydrogenase (NADP(+)) of Aeromonas salmonicida (strain A449).